A 156-amino-acid polypeptide reads, in one-letter code: Small ribosomal subunit protein uS7 (156 aa).

Belongs to the universal ribosomal protein uS7 family. In terms of assembly, part of the 30S ribosomal subunit. Contacts proteins S9 and S11.

In terms of biological role, one of the primary rRNA binding proteins, it binds directly to 16S rRNA where it nucleates assembly of the head domain of the 30S subunit. Is located at the subunit interface close to the decoding center, probably blocks exit of the E-site tRNA. This is Small ribosomal subunit protein uS7 from Staphylococcus aureus (strain bovine RF122 / ET3-1).